An 88-amino-acid polypeptide reads, in one-letter code: Apolipoprotein C-I (88 aa).

An N-terminal signal peptide occupies residues 1–26; the sequence is MRLLLSLPVLLVALSVVLERPAPAQA.

Belongs to the apolipoprotein C1 family.

Its subcellular location is the secreted. Inhibitor of lipoprotein binding to the low density lipoprotein (LDL) receptor, LDL receptor-related protein, and very low density lipoprotein (VLDL) receptor. Associates with high density lipoproteins (HDL) and the triacylglycerol-rich lipoproteins in the plasma and makes up about 10% of the protein of the VLDL and 2% of that of HDL. Appears to interfere directly with fatty acid uptake and is also the major plasma inhibitor of cholesteryl ester transfer protein (CETP). Binds free fatty acids and reduces their intracellular esterification. Modulates the interaction of APOE with beta-migrating VLDL and inhibits binding of beta-VLDL to the LDL receptor-related protein. The protein is Apolipoprotein C-I (APOC1) of Tupaia glis (Common tree shrew).